Consider the following 428-residue polypeptide: Elongation factor 1-alpha (428 aa).

In terms of domain architecture, tr-type G spans 5-225 (KPVLNVAFIG…DKFQPPEKPT (221 aa)). The segment at 14–21 (GHVDAGKS) is G1. 14–21 (GHVDAGKS) is a GTP binding site. A Mg(2+)-binding site is contributed by Ser21. The tract at residues 70–74 (GVTID) is G2. Residues 91–94 (DCPG) form a G3 region. GTP-binding positions include 91 to 95 (DCPGH) and 149 to 152 (NKMD). The interval 149–152 (NKMD) is G4. A G5 region spans residues 189 to 191 (ASL).

This sequence belongs to the TRAFAC class translation factor GTPase superfamily. Classic translation factor GTPase family. EF-Tu/EF-1A subfamily.

The protein localises to the cytoplasm. It catalyses the reaction GTP + H2O = GDP + phosphate + H(+). Its function is as follows. GTP hydrolase that promotes the GTP-dependent binding of aminoacyl-tRNA to the A-site of ribosomes during protein biosynthesis. This is Elongation factor 1-alpha from Methanocaldococcus jannaschii (strain ATCC 43067 / DSM 2661 / JAL-1 / JCM 10045 / NBRC 100440) (Methanococcus jannaschii).